The primary structure comprises 130 residues: ATP synthase epsilon chain, chloroplastic (130 aa).

Belongs to the ATPase epsilon chain family. F-type ATPases have 2 components, CF(1) - the catalytic core - and CF(0) - the membrane proton channel. CF(1) has five subunits: alpha(3), beta(3), gamma(1), delta(1), epsilon(1). CF(0) has three main subunits: a, b and c.

The protein localises to the plastid. Its subcellular location is the chloroplast thylakoid membrane. Functionally, produces ATP from ADP in the presence of a proton gradient across the membrane. In Emiliania huxleyi (Coccolithophore), this protein is ATP synthase epsilon chain, chloroplastic.